A 160-amino-acid chain; its full sequence is Cyclic pyranopterin monophosphate synthase (160 aa).

Substrate-binding positions include 77 to 79 and 115 to 116; these read LCH and ME. The active site involves D130.

It belongs to the MoaC family. Homohexamer; trimer of dimers.

The enzyme catalyses (8S)-3',8-cyclo-7,8-dihydroguanosine 5'-triphosphate = cyclic pyranopterin phosphate + diphosphate. The protein operates within cofactor biosynthesis; molybdopterin biosynthesis. Catalyzes the conversion of (8S)-3',8-cyclo-7,8-dihydroguanosine 5'-triphosphate to cyclic pyranopterin monophosphate (cPMP). This chain is Cyclic pyranopterin monophosphate synthase, found in Parvibaculum lavamentivorans (strain DS-1 / DSM 13023 / NCIMB 13966).